Reading from the N-terminus, the 100-residue chain is uncharacterized protein (100 aa).

2 helical membrane-spanning segments follow: residues 17 to 37 and 78 to 98; these read IIIL…SVSF and MVDK…TIPF.

Its subcellular location is the endoplasmic reticulum membrane. This is an uncharacterized protein from Saccharomyces cerevisiae (strain ATCC 204508 / S288c) (Baker's yeast).